Reading from the N-terminus, the 513-residue chain is Pantetheinase (513 aa).

Positions M1 to S22 are cleaved as a signal peptide. The CN hydrolase domain occupies A40–S307. The active-site Proton acceptor is the E80. N147 carries an N-linked (GlcNAc...) asparagine glycan. The Proton donor role is filled by K179. C212 serves as the catalytic Nucleophile. Residues N315 and N353 are each glycosylated (N-linked (GlcNAc...) asparagine). The GPI-anchor amidated glycine moiety is linked to residue G487. The propeptide at A488–W513 is removed in mature form.

This sequence belongs to the carbon-nitrogen hydrolase superfamily. BTD/VNN family. Monomer. As to expression, detected in kidney (at protein level).

It is found in the cell membrane. It catalyses the reaction (R)-pantetheine + H2O = cysteamine + (R)-pantothenate. In terms of biological role, amidohydrolase that hydrolyzes specifically one of the carboamide linkages in D-pantetheine thus recycling pantothenic acid (vitamin B5) and releasing cysteamine. The polypeptide is Pantetheinase (VNN1) (Sus scrofa (Pig)).